The primary structure comprises 401 residues: Argininosuccinate synthase (401 aa).

9-17 is an ATP binding site; it reads AYSGGLDTS. Tyr86 is an L-citrulline binding site. Gly116 serves as a coordination point for ATP. L-aspartate-binding residues include Thr118, Asn122, and Asp123. Asn122 contacts L-citrulline. L-citrulline is bound by residues Arg126, Ser174, Ser183, Glu259, and Tyr271.

This sequence belongs to the argininosuccinate synthase family. Type 1 subfamily. In terms of assembly, homotetramer.

The protein resides in the cytoplasm. The catalysed reaction is L-citrulline + L-aspartate + ATP = 2-(N(omega)-L-arginino)succinate + AMP + diphosphate + H(+). Its pathway is amino-acid biosynthesis; L-arginine biosynthesis; L-arginine from L-ornithine and carbamoyl phosphate: step 2/3. The chain is Argininosuccinate synthase from Bacillus cereus (strain AH820).